A 94-amino-acid chain; its full sequence is Small ribosomal subunit protein uS19 (94 aa).

The protein belongs to the universal ribosomal protein uS19 family.

Its function is as follows. Protein S19 forms a complex with S13 that binds strongly to the 16S ribosomal RNA. The sequence is that of Small ribosomal subunit protein uS19 from Wolbachia pipientis wMel.